Reading from the N-terminus, the 564-residue chain is Proline--tRNA ligase (564 aa).

Belongs to the class-II aminoacyl-tRNA synthetase family. ProS type 1 subfamily. Homodimer.

The protein localises to the cytoplasm. The enzyme catalyses tRNA(Pro) + L-proline + ATP = L-prolyl-tRNA(Pro) + AMP + diphosphate. Catalyzes the attachment of proline to tRNA(Pro) in a two-step reaction: proline is first activated by ATP to form Pro-AMP and then transferred to the acceptor end of tRNA(Pro). As ProRS can inadvertently accommodate and process non-cognate amino acids such as alanine and cysteine, to avoid such errors it has two additional distinct editing activities against alanine. One activity is designated as 'pretransfer' editing and involves the tRNA(Pro)-independent hydrolysis of activated Ala-AMP. The other activity is designated 'posttransfer' editing and involves deacylation of mischarged Ala-tRNA(Pro). The misacylated Cys-tRNA(Pro) is not edited by ProRS. In Xylella fastidiosa (strain 9a5c), this protein is Proline--tRNA ligase.